The chain runs to 1087 residues: Gelsolin-related protein of 125 kDa (1087 aa).

Positions 1-40 (MEEDNIVDSKEIENNVEDKKEETPSSSPSPSSSLQQQQEE) are disordered. The segment covering 7–23 (VDSKEIENNVEDKKEET) has biased composition (basic and acidic residues). Residues 24–40 (PSSSPSPSSSLQQQQEE) are compositionally biased toward low complexity. Gelsolin-like repeat units lie at residues 73-146 (PFHF…PTFL), 183-286 (FLFK…FSKW), 335-442 (GKLL…FGTE), and 465-538 (TQLF…DNFW). A coiled-coil region spans residues 550 to 598 (INTFINENKEEKEKEEEEKEEEEEEEEEEEEEEEEEKDNNKTTTIIKHL). The segment at 555 to 592 (NENKEEKEKEEEEKEEEEEEEEEEEEEEEEEKDNNKTT) is disordered. Residues 562–586 (EKEEEEKEEEEEEEEEEEEEEEEEK) are compositionally biased toward acidic residues. The stretch at 614–692 (IFKADQINPF…EQYNESPLFK (79 aa)) is one Gelsolin-like 5 repeat. The stretch at 710–912 (IISYKQKLAE…ETVNEENEVG (203 aa)) forms a coiled coil. Composition is skewed to basic and acidic residues over residues 732 to 770 (KQQQ…KEEE), 779 to 808 (EEVK…KEVN), 817 to 840 (EEVK…KEEE), and 849 to 900 (EEVK…KVNE). A disordered region spans residues 732–1087 (KQQQEQEQEQ…HNRSSSLTHA (356 aa)). Over residues 901-910 (ENETVNEENE) the composition is skewed to acidic residues. Polar residues-rich tracts occupy residues 925–939 (ANSS…NEGS) and 950–961 (EPITPSVVSSSG). Over residues 983–1002 (QGRKGGRKSHGKNQPQHKKN) the composition is skewed to basic residues. The span at 1018-1040 (KSLNLDIDNQSFDLNSINNNNSV) shows a compositional bias: polar residues. Over residues 1047–1065 (SSPLSFSSSSINSNSTHNT) the composition is skewed to low complexity. Residues 1066–1080 (PSKKNKNKNKKKHNR) show a composition bias toward basic residues.

The protein belongs to the villin/gelsolin family. Interacts with rasD and abpC.

The protein resides in the cytoplasmic vesicle. Involved in phototaxis. Required for coupling photodetection to the locomotory machinery of slugs. May be essential in the natural environment for the propagation of spores. In Dictyostelium discoideum (Social amoeba), this protein is Gelsolin-related protein of 125 kDa (gnrA).